The sequence spans 244 residues: Capsid protein (244 aa).

The short motif at 1–24 is the Bipartite nuclear localization signal element; that stretch reads MSTSKRKRADEVQWNKRSTKKKAS. Positions 1–38 are disordered; it reads MSTSKRKRADEVQWNKRSTKKKASAPPVKKTGGKADRP.

It belongs to the geminiviridae capsid protein family. In terms of assembly, homomultimer. Interacts with the movement protein. Binds to single-stranded and double-stranded viral DNA.

The protein localises to the virion. It localises to the host nucleus. Encapsidates the viral genome into characteristic twinned ('geminate') particles. Binds the genomic viral ssDNA and shuttles it into and out of the cell nucleus. Plays a role in protection of the genome from degradation, virus acquisition and transmission by insect vectors, infectivity, and systemic movement. The CP of monopartite geminiviruses is absolutely essential for virus movement. This is Capsid protein from Maize streak virus genotype E (isolate Pat) (MSV).